The chain runs to 173 residues: ATP synthase subunit b (173 aa).

A helical transmembrane segment spans residues 12 to 32; it reads LDVNPGLVVWTLVTFLVVVLV.

Belongs to the ATPase B chain family. As to quaternary structure, F-type ATPases have 2 components, F(1) - the catalytic core - and F(0) - the membrane proton channel. F(1) has five subunits: alpha(3), beta(3), gamma(1), delta(1), epsilon(1). F(0) has three main subunits: a(1), b(2) and c(10-14). The alpha and beta chains form an alternating ring which encloses part of the gamma chain. F(1) is attached to F(0) by a central stalk formed by the gamma and epsilon chains, while a peripheral stalk is formed by the delta and b chains.

It localises to the cell inner membrane. F(1)F(0) ATP synthase produces ATP from ADP in the presence of a proton or sodium gradient. F-type ATPases consist of two structural domains, F(1) containing the extramembraneous catalytic core and F(0) containing the membrane proton channel, linked together by a central stalk and a peripheral stalk. During catalysis, ATP synthesis in the catalytic domain of F(1) is coupled via a rotary mechanism of the central stalk subunits to proton translocation. Functionally, component of the F(0) channel, it forms part of the peripheral stalk, linking F(1) to F(0). This chain is ATP synthase subunit b, found in Leptospira interrogans serogroup Icterohaemorrhagiae serovar copenhageni (strain Fiocruz L1-130).